The following is a 163-amino-acid chain: SsrA-binding protein (163 aa).

Positions 138–157 (EDRRGAIAERESKREMDRAL) are enriched in basic and acidic residues. Residues 138-163 (EDRRGAIAERESKREMDRALARGRRR) form a disordered region.

This sequence belongs to the SmpB family.

It is found in the cytoplasm. In terms of biological role, required for rescue of stalled ribosomes mediated by trans-translation. Binds to transfer-messenger RNA (tmRNA), required for stable association of tmRNA with ribosomes. tmRNA and SmpB together mimic tRNA shape, replacing the anticodon stem-loop with SmpB. tmRNA is encoded by the ssrA gene; the 2 termini fold to resemble tRNA(Ala) and it encodes a 'tag peptide', a short internal open reading frame. During trans-translation Ala-aminoacylated tmRNA acts like a tRNA, entering the A-site of stalled ribosomes, displacing the stalled mRNA. The ribosome then switches to translate the ORF on the tmRNA; the nascent peptide is terminated with the 'tag peptide' encoded by the tmRNA and targeted for degradation. The ribosome is freed to recommence translation, which seems to be the essential function of trans-translation. In Anaeromyxobacter dehalogenans (strain 2CP-1 / ATCC BAA-258), this protein is SsrA-binding protein.